A 411-amino-acid chain; its full sequence is CCA-adding enzyme (411 aa).

2 residues coordinate ATP: glycine 8 and arginine 11. Residues glycine 8 and arginine 11 each coordinate CTP. Mg(2+) contacts are provided by glutamate 21 and aspartate 23. ATP-binding residues include arginine 91, arginine 137, and arginine 140. CTP-binding residues include arginine 91, arginine 137, and arginine 140. One can recognise an HD domain in the interval 227 to 328; the sequence is LGNQTMTRLS…MTIFQAFDCW (102 aa).

This sequence belongs to the tRNA nucleotidyltransferase/poly(A) polymerase family. Bacterial CCA-adding enzyme type 2 subfamily. Mg(2+) is required as a cofactor.

It carries out the reaction a tRNA precursor + 2 CTP + ATP = a tRNA with a 3' CCA end + 3 diphosphate. It catalyses the reaction a tRNA with a 3' CCA end + 2 CTP + ATP = a tRNA with a 3' CCACCA end + 3 diphosphate. In terms of biological role, catalyzes the addition and repair of the essential 3'-terminal CCA sequence in tRNAs without using a nucleic acid template. Adds these three nucleotides in the order of C, C, and A to the tRNA nucleotide-73, using CTP and ATP as substrates and producing inorganic pyrophosphate. tRNA 3'-terminal CCA addition is required both for tRNA processing and repair. Also involved in tRNA surveillance by mediating tandem CCA addition to generate a CCACCA at the 3' terminus of unstable tRNAs. While stable tRNAs receive only 3'-terminal CCA, unstable tRNAs are marked with CCACCA and rapidly degraded. This Blochmanniella floridana protein is CCA-adding enzyme.